The following is an 89-amino-acid chain: Small ribosomal subunit protein uS19 (89 aa).

The protein belongs to the universal ribosomal protein uS19 family.

Its function is as follows. Protein S19 forms a complex with S13 that binds strongly to the 16S ribosomal RNA. This chain is Small ribosomal subunit protein uS19, found in Xanthomonas campestris pv. campestris (strain 8004).